Consider the following 81-residue polypeptide: Cytochrome b559 subunit alpha (81 aa).

Positions 18 and 23 each coordinate heme. A helical membrane pass occupies residues 19–40 (YWVIHSITIPMLFIAGWLFVST).

This sequence belongs to the PsbE/PsbF family. In terms of assembly, heterodimer of an alpha subunit and a beta subunit. PSII is composed of 1 copy each of membrane proteins PsbA, PsbB, PsbC, PsbD, PsbE, PsbF, PsbH, PsbI, PsbJ, PsbK, PsbL, PsbM, PsbT, PsbX, PsbY, PsbZ, Psb30/Ycf12, peripheral proteins PsbO, CyanoQ (PsbQ), PsbU, PsbV and a large number of cofactors. It forms dimeric complexes. The cofactor is heme b.

The protein resides in the cellular thylakoid membrane. Functionally, this b-type cytochrome is tightly associated with the reaction center of photosystem II (PSII). PSII is a light-driven water:plastoquinone oxidoreductase that uses light energy to abstract electrons from H(2)O, generating O(2) and a proton gradient subsequently used for ATP formation. It consists of a core antenna complex that captures photons, and an electron transfer chain that converts photonic excitation into a charge separation. This chain is Cytochrome b559 subunit alpha, found in Synechocystis sp. (strain ATCC 27184 / PCC 6803 / Kazusa).